The following is an 86-amino-acid chain: Cell division topological specificity factor (86 aa).

The protein belongs to the MinE family.

Its function is as follows. Prevents the cell division inhibition by proteins MinC and MinD at internal division sites while permitting inhibition at polar sites. This ensures cell division at the proper site by restricting the formation of a division septum at the midpoint of the long axis of the cell. The sequence is that of Cell division topological specificity factor from Shewanella pealeana (strain ATCC 700345 / ANG-SQ1).